A 293-amino-acid polypeptide reads, in one-letter code: Phosphoribosylaminoimidazole-succinocarboxamide synthase (293 aa).

This sequence belongs to the SAICAR synthetase family.

It carries out the reaction 5-amino-1-(5-phospho-D-ribosyl)imidazole-4-carboxylate + L-aspartate + ATP = (2S)-2-[5-amino-1-(5-phospho-beta-D-ribosyl)imidazole-4-carboxamido]succinate + ADP + phosphate + 2 H(+). The protein operates within purine metabolism; IMP biosynthesis via de novo pathway; 5-amino-1-(5-phospho-D-ribosyl)imidazole-4-carboxamide from 5-amino-1-(5-phospho-D-ribosyl)imidazole-4-carboxylate: step 1/2. In Bordetella petrii (strain ATCC BAA-461 / DSM 12804 / CCUG 43448), this protein is Phosphoribosylaminoimidazole-succinocarboxamide synthase.